Here is a 318-residue protein sequence, read N- to C-terminus: NADH-ubiquinone oxidoreductase chain 1 (318 aa).

The next 8 helical transmembrane spans lie at 2-22 (FLINVLTVTLPILLAVAFLTL), 69-89 (FLFTIAPILALTLALTVWAPL), 102-122 (LLFILAMSSLMVYSILWSGWA), 146-166 (MTTIILSMVLMNGSFTLTAFA), 171-191 (HLWLIFPMWPLMMMWFTSTLA), 222-242 (LFFMAEYANIIMMNALTVILF), 253-273 (EISTINFVVKTMILTICFLWV), and 294-314 (LPLTLALCMWHISILISLACI).

It belongs to the complex I subunit 1 family.

It localises to the mitochondrion inner membrane. It catalyses the reaction a ubiquinone + NADH + 5 H(+)(in) = a ubiquinol + NAD(+) + 4 H(+)(out). In terms of biological role, core subunit of the mitochondrial membrane respiratory chain NADH dehydrogenase (Complex I) that is believed to belong to the minimal assembly required for catalysis. Complex I functions in the transfer of electrons from NADH to the respiratory chain. The immediate electron acceptor for the enzyme is believed to be ubiquinone. This Mammuthus primigenius (Siberian woolly mammoth) protein is NADH-ubiquinone oxidoreductase chain 1 (MT-ND1).